We begin with the raw amino-acid sequence, 149 residues long: Alpha-crystallin A chain (149 aa).

The sHSP domain occupies 41–149; sequence LFRSVLESGI…DPSHSERPIP (109 aa). The Zn(2+) site is built by H89, E91, H96, and H143.

The protein belongs to the small heat shock protein (HSP20) family. Heteropolymer composed of three CRYAA and one CRYAB subunits. Inter-subunit bridging via zinc ions enhances stability, which is crucial as there is no protein turn over in the lens. Can also form homodimers and homotetramers (dimers of dimers) which serve as the building blocks of homooligomers. Within homooligomers, the zinc-binding motif is created from residues of 3 different molecules. His-89 and Glu-91 from one molecule are ligands of the zinc ion, and His-96 and His-143 residues from additional molecules complete the site with tetrahedral coordination geometry.

The protein resides in the cytoplasm. It is found in the nucleus. Contributes to the transparency and refractive index of the lens. May act as a chaperone, preventing aggregation of various proteins under a wide range of stress conditions. The chain is Alpha-crystallin A chain (CRYAA) from Eudromia elegans (Elegant crested-tinamou).